The following is a 568-amino-acid chain: Urease subunit alpha (568 aa).

One can recognise a Urease domain in the interval 133 to 568; that stretch reads GGLDIHIHFN…ELPLAQRYLL (436 aa). Ni(2+)-binding residues include His138, His140, and Lys217. At Lys217 the chain carries N6-carboxylysine. A substrate-binding site is contributed by His219. Ni(2+)-binding residues include His246 and His272. His320 functions as the Proton donor in the catalytic mechanism. Ni(2+) is bound at residue Asp360.

The protein belongs to the metallo-dependent hydrolases superfamily. Urease alpha subunit family. Heterotrimer of UreA (gamma), UreB (beta) and UreC (alpha) subunits. Three heterotrimers associate to form the active enzyme. It depends on Ni cation as a cofactor. Post-translationally, carboxylation allows a single lysine to coordinate two nickel ions.

Its subcellular location is the cytoplasm. The catalysed reaction is urea + 2 H2O + H(+) = hydrogencarbonate + 2 NH4(+). Its pathway is nitrogen metabolism; urea degradation; CO(2) and NH(3) from urea (urease route): step 1/1. The protein is Urease subunit alpha of Haloarcula marismortui (strain ATCC 43049 / DSM 3752 / JCM 8966 / VKM B-1809) (Halobacterium marismortui).